The sequence spans 619 residues: Calnexin (619 aa).

Positions 1–21 (MVNRKWMYIFIQFLLVSSIRS) are cleaved as a signal peptide. Ca(2+) is bound at residue Asp109. A disulfide bond links Cys152 and Cys186. 4 residues coordinate an alpha-D-glucoside: Tyr156, Lys158, Tyr177, and Asp184. N-linked (GlcNAc...) asparagine glycosylation is present at Asn203. Residues 268–401 (IFDETDLKPV…RLIDNPNYFE (134 aa)) form a p domain (Extended arm) region. A run of 5 repeats spans residues 270–282 (DETDLKPVDWDER), 287–299 (DESAVKPDDWDEN), 306–318 (DEAATKPYDWNEE), 325–337 (DPEAKKPQDWDED), and 340–350 (GSWEAPLIDNP). 4 X approximate repeats stretches follow at residues 270-337 (DETD…WDED) and 340-397 (GSWE…IDNP). Cys352 and Cys358 are disulfide-bonded. A run of 3 repeats spans residues 359-369 (GTWKAPTIKNP), 373-383 (GKWIRPKISNP), and 387-397 (GKWTARLIDNP). An alpha-D-glucoside is bound at residue Glu417. Residue Asp428 coordinates Ca(2+). The helical transmembrane segment at 481–501 (LWAVYILCVLLPLVAIGVFCF) threads the bilayer. The interval 538 to 619 (GDEEDDVNQP…AKRRTARRGD (82 aa)) is disordered. Over residues 547–557 (PGPSGSQSNPE) the composition is skewed to polar residues. Residues 566–577 (EQQSANSSQSSA) are compositionally biased toward low complexity. N-linked (GlcNAc...) asparagine glycosylation occurs at Asn571. Positions 585-601 (HVVPENEPVKPTEEFAK) are enriched in basic and acidic residues. The segment covering 610–619 (AKRRTARRGD) has biased composition (basic residues).

It belongs to the calreticulin family. In terms of processing, glycosylation is important for its biological activity. In terms of tissue distribution, expressed ubiquitously in every blastomere of the embryo up to the gastrulation stage. Expression becomes gradually restricted to the head and tail regions at the comma stage during embryogenesis. During postembryonic development, expressed prominently in the H-shaped excretory cell, in the neurons of head (including ASK and ADL) and tail (including PHA and PHB), in the dorsal and ventral nerve cords, and in the spermatheca. Expressed in the spicules of the male tail (at protein level).

The protein localises to the endoplasmic reticulum membrane. It is found in the cytoplasm. It localises to the perinuclear region. Its subcellular location is the cytoplasmic vesicle. In terms of biological role, calcium-binding protein that interacts with newly synthesized monoglucosylated glycoproteins in the endoplasmic reticulum. It may act in assisting protein assembly and/or in the retention within the ER of unassembled protein subunits. It seems to play a major role in the quality control apparatus of the ER by the retention of incorrectly folded proteins. Required for embryogenesis and larval development under heat and ER stress conditions. May be important for germ cell development. Involved in neuronal necrotic cell death. The polypeptide is Calnexin (cnx-1) (Caenorhabditis elegans).